The primary structure comprises 273 residues: Type II restriction enzyme HgiCII (273 aa).

This sequence belongs to the TdeIII type II restriction endonuclease family.

The enzyme catalyses Endonucleolytic cleavage of DNA to give specific double-stranded fragments with terminal 5'-phosphates.. In terms of biological role, a P subtype restriction enzyme that recognizes the double-stranded sequence 5'-GGWCC-3' and cleaves after G-1. This Herpetosiphon aurantiacus (Herpetosiphon giganteus) protein is Type II restriction enzyme HgiCII.